Here is a 555-residue protein sequence, read N- to C-terminus: Glutamine--tRNA ligase (555 aa).

The 'HIGH' region signature appears at 35 to 45; it reads PEPNGYLHIGH. Residues 36-38 and 42-48 contribute to the ATP site; these read EPN and HIGHAKS. L-glutamine-binding residues include D68 and Y213. Residues T232 and 262–263 contribute to the ATP site; that span reads RL. Residues 269 to 273 carry the 'KMSKS' region motif; that stretch reads ITSKR.

The protein belongs to the class-I aminoacyl-tRNA synthetase family. As to quaternary structure, monomer.

The protein localises to the cytoplasm. The catalysed reaction is tRNA(Gln) + L-glutamine + ATP = L-glutaminyl-tRNA(Gln) + AMP + diphosphate. This is Glutamine--tRNA ligase from Azotobacter vinelandii (strain DJ / ATCC BAA-1303).